The chain runs to 203 residues: RNA annealing protein YRA2 (203 aa).

Met1 is subject to N-acetylmethionine. Disordered stretches follow at residues 1-60 (MDKA…REEP) and 134-203 (EIYQ…YMKG). Residues 11-20 (NSHTDSSSNH) are compositionally biased toward polar residues. Positions 47 to 60 (SRSKDRLYREREEP) are enriched in basic and acidic residues. Residues 64 to 138 (KRIRISKIPL…AKIEVEIYQP (75 aa)) form the RRM domain. 2 stretches are compositionally biased toward basic residues: residues 139 to 153 (QRKH…RRKQ) and 163 to 180 (PGSH…KNKG).

The protein belongs to the YRA1 family. In terms of assembly, associates with mRNPs. Interacts with YRA1.

The protein resides in the nucleus. Involved in export of poly(A) mRNAs from the nucleus. Recruited to the coding sequences as well as poly-A sites of active genes. The polypeptide is RNA annealing protein YRA2 (YRA2) (Saccharomyces cerevisiae (strain RM11-1a) (Baker's yeast)).